The sequence spans 392 residues: Elongation factor Tu (392 aa).

In terms of domain architecture, tr-type G spans 10 to 202 (KVHVNVGTIG…VLDEYIEDPI (193 aa)). Residues 19–26 (GHVDHGKT) are G1. GTP is bound at residue 19-26 (GHVDHGKT). A Mg(2+)-binding site is contributed by threonine 26. The interval 60 to 64 (GITIN) is G2. Positions 81-84 (DCPG) are G3. GTP is bound by residues 81–85 (DCPGH) and 136–139 (NKCD). Residues 136–139 (NKCD) are G4. Residues 174 to 176 (SAL) are G5.

It belongs to the TRAFAC class translation factor GTPase superfamily. Classic translation factor GTPase family. EF-Tu/EF-1A subfamily. As to quaternary structure, monomer.

It is found in the cytoplasm. It carries out the reaction GTP + H2O = GDP + phosphate + H(+). Its function is as follows. GTP hydrolase that promotes the GTP-dependent binding of aminoacyl-tRNA to the A-site of ribosomes during protein biosynthesis. In Phytoplasma mali (strain AT), this protein is Elongation factor Tu.